Reading from the N-terminus, the 455-residue chain is Chitin deacetylase 2 (455 aa).

An N-terminal signal peptide occupies residues 1-19 (MIPSTAAALLTLTAGAAFA). Residues Asn86, Asn98, Asn122, and Asn142 are each glycosylated (N-linked (GlcNAc...) asparagine). The region spanning 157 to 347 (MTWGLGFDDG…IKSAFNYIVP (191 aa)) is the NodB homology domain. The Proton acceptor role is filled by Asp164. Residue Asp164 coordinates acetate. Asp165 is a Co(2+) binding site. The N-linked (GlcNAc...) asparagine glycan is linked to Asn168. 2 residues coordinate Co(2+): His214 and His218. Tyr255 is an acetate binding site. Residues Asn270 and Asn308 are each glycosylated (N-linked (GlcNAc...) asparagine). His321 (proton donor) is an active-site residue. N-linked (GlcNAc...) asparagine glycosylation is found at Asn325, Asn353, Asn362, and Asn377. A disordered region spans residues 381–423 (STTQKDGSSSTNTASGSGAAGSASATSSSDDSSSSGGSSGSSG). N-linked (GlcNAc...) asparagine glycosylation occurs at Asn426. Ser429 is lipidated: GPI-anchor amidated serine. The propeptide at 430-455 (GALGMFDSLSGVGLILGGVVAGVMLL) is removed in mature form.

The protein belongs to the polysaccharide deacetylase family. Requires Co(2+) as cofactor. Post-translationally, the GPI anchor is required for the attachment to the cell membrane but not for cell surface targeting.

The protein resides in the secreted. It is found in the cell wall. The protein localises to the cell membrane. The enzyme catalyses [(1-&gt;4)-N-acetyl-beta-D-glucosaminyl](n) + n H2O = chitosan + n acetate. Its function is as follows. Hydrolyzes the N-acetamido groups of N-acetyl-D-glucosamine residues in chitin to form chitosan and acetate. Chitosan is required to anchor melanin to the cell wall, for maintenance of cell wall integrity, and for proper cytokinesis. Chitosan offers an advantage during infection as it is less readily detected than chitin by host immunosurveillance mechanisms. The polypeptide is Chitin deacetylase 2 (Cryptococcus neoformans var. grubii serotype A (strain H99 / ATCC 208821 / CBS 10515 / FGSC 9487) (Filobasidiella neoformans var. grubii)).